The primary structure comprises 378 residues: Septin-5 (378 aa).

Residues 50 to 323 (KGFDFTLMVA…ENYRAHCIQQ (274 aa)) form the Septin-type G domain. Residues 60–67 (GESGLGKS) are G1 motif. Residues 60 to 67 (GESGLGKS), threonine 94, and glycine 120 each bind GTP. A G3 motif region spans residues 117-120 (DTPG). Arginine 177 carries the omega-N-methylarginine modification. The tract at residues 198-201 (AKAD) is G4 motif. 199–207 (KADCLVPSE) serves as a coordination point for GTP. Serine 234 bears the Phosphoserine mark. 2 residues coordinate GTP: glycine 257 and arginine 272. At serine 336 the chain carries Phosphoserine. Phosphothreonine is present on threonine 345. A coiled-coil region spans residues 347–378 (DAETEKLIRMKDEELRRMQEMLQRMKQQMQDQ).

It belongs to the TRAFAC class TrmE-Era-EngA-EngB-Septin-like GTPase superfamily. Septin GTPase family. As to quaternary structure, septins polymerize into heterooligomeric protein complexes that form filaments, and can associate with cellular membranes, actin filaments and microtubules. GTPase activity is required for filament formation. Interacts with SEPTIN2 and SEPTIN5. In platelets, associated with a complex containing STX4. Interacts with PRKN; this interaction leads to SEPTIN5 ubiquitination and degradation. Interacts with DYRK1A. Interacts with STX1A; in the cerebellar cortex. Phosphorylated by DYRK1A.

It localises to the cytoplasm. Its subcellular location is the cytoskeleton. Functionally, filament-forming cytoskeletal GTPase. May play a role in cytokinesis (Potential). May play a role in platelet secretion. This is Septin-5 from Macaca fascicularis (Crab-eating macaque).